Reading from the N-terminus, the 364-residue chain is MFVARSIAADHKDLIHDVSYDFHGRRMATCSSDQSVKVWDKSDNGEWNCTASWKTHSGSVWRVTWAHPEFGQVLASCSFDRTAAVWEEIVGESNDKQRGLSHWIKRTTLVDSRTSVTDVKFAPKHMGLMLTTCSADGVVRIYEAPDVMNLSQWSLQHEISCKLSCSCISWNPSSSRAHSPMIAVGSDDSNTAYSGKVQIYEYVENTRKYAKVETLMTVTDPVHDIAFAPNLGRSFHVLAIATKDVRIFKLIPMRKESSSSGPTKLEVQLQAQFDGHNSQVWRVSWNITSTLLASSGDDGCVRLWKANYMDNWKCTGILRGDGSPVNGAAGQAGTPGAAGTPGGPASQNALQAVAGRKKAQLMPG.

6 WD repeats span residues 10–49 (DHKD…EWNC), 55–96 (THSG…SNDK), 111–152 (DSRT…NLSQ), 160–210 (SCKL…RKYA), 217–258 (TVTD…KESS), and 275–314 (GHNS…NWKC). The interval 326–364 (NGAAGQAGTPGAAGTPGGPASQNALQAVAGRKKAQLMPG) is disordered. Low complexity predominate over residues 327–338 (GAAGQAGTPGAA). The span at 355–364 (GRKKAQLMPG) shows a compositional bias: basic residues.

Belongs to the WD repeat SEC13 family. In terms of assembly, component of the Nup107-160 subcomplex of the nuclear pore complex (NPC). The Nup107-160 subcomplex includes NUP160, NUP133, NUP107, NUP98, NUP85, NUP43, NUP37, SEH1 and SEC13. Component of the GATOR2 subcomplex, composed of MIOS, SEC13, SEH1L, WDR24 and WDR59. The GATOR2 complex interacts with CASTOR1 and CASTOR2; the interaction is negatively regulated by arginine. The GATOR2 complex interacts with SESN1, SESN2 and SESN3; the interaction is negatively regulated by amino acids.

The protein localises to the chromosome. The protein resides in the centromere. Its subcellular location is the kinetochore. It localises to the nucleus. It is found in the nuclear pore complex. The protein localises to the lysosome membrane. The GATOR2 complex is negatively regulated by the upstream amino acid sensors CASTOR1 and SESN2, which sequester the GATOR2 complex in absence of amino acids. In the presence of abundant amino acids, GATOR2 is released from CASTOR1 and SESN2 and activated. In terms of biological role, component of the Nup107-160 subcomplex of the nuclear pore complex (NPC). The Nup107-160 subcomplex is required for the assembly of a functional NPC. The Nup107-160 subcomplex is also required for normal kinetochore microtubule attachment, mitotic progression and chromosome segregation. This subunit plays a role in recruitment of the Nup107-160 subcomplex to the kinetochore. Its function is as follows. As a component of the GATOR2 complex, functions as an activator of the amino acid-sensing branch of the mTORC1 signaling pathway. The GATOR2 complex indirectly activates mTORC1 through the inhibition of the GATOR1 subcomplex. GATOR2 probably acts as an E3 ubiquitin-protein ligase toward GATOR1. In the presence of abundant amino acids, the GATOR2 complex mediates ubiquitination of the NPRL2 core component of the GATOR1 complex, leading to GATOR1 inactivation. In the absence of amino acids, GATOR2 is inhibited, activating the GATOR1 complex. This Osmerus mordax (Rainbow smelt) protein is Nucleoporin SEH1 (seh1l).